Consider the following 144-residue polypeptide: Large ribosomal subunit protein uL16 (144 aa).

Belongs to the universal ribosomal protein uL16 family. As to quaternary structure, part of the 50S ribosomal subunit.

Functionally, binds 23S rRNA and is also seen to make contacts with the A and possibly P site tRNAs. This is Large ribosomal subunit protein uL16 from Clostridium perfringens (strain ATCC 13124 / DSM 756 / JCM 1290 / NCIMB 6125 / NCTC 8237 / Type A).